Reading from the N-terminus, the 345-residue chain is UDP-N-acetylenolpyruvoylglucosamine reductase (345 aa).

The FAD-binding PCMH-type domain occupies 59-254 (VGGPAACLAR…RKATQPLGRP (196 aa)). Arg-209 is an active-site residue. Cys-258 functions as the Proton donor in the catalytic mechanism. Glu-328 is an active-site residue.

This sequence belongs to the MurB family. FAD is required as a cofactor.

It is found in the cytoplasm. The catalysed reaction is UDP-N-acetyl-alpha-D-muramate + NADP(+) = UDP-N-acetyl-3-O-(1-carboxyvinyl)-alpha-D-glucosamine + NADPH + H(+). It functions in the pathway cell wall biogenesis; peptidoglycan biosynthesis. Cell wall formation. This Syntrophobacter fumaroxidans (strain DSM 10017 / MPOB) protein is UDP-N-acetylenolpyruvoylglucosamine reductase.